The primary structure comprises 644 residues: Threonine--tRNA ligase (644 aa).

Positions 1–61 constitute a TGS domain; sequence MVAITLPDGS…VADAKVEIVT (61 aa). Residues 242–533 form a catalytic region; that stretch reads DHRKIGKALN…LIENYAGWMP (292 aa). Residues Cys-333, His-384, and His-510 each coordinate Zn(2+).

This sequence belongs to the class-II aminoacyl-tRNA synthetase family. As to quaternary structure, homodimer. Zn(2+) serves as cofactor.

Its subcellular location is the cytoplasm. It carries out the reaction tRNA(Thr) + L-threonine + ATP = L-threonyl-tRNA(Thr) + AMP + diphosphate + H(+). In terms of biological role, catalyzes the attachment of threonine to tRNA(Thr) in a two-step reaction: L-threonine is first activated by ATP to form Thr-AMP and then transferred to the acceptor end of tRNA(Thr). Also edits incorrectly charged L-seryl-tRNA(Thr). The polypeptide is Threonine--tRNA ligase (Psychrobacter arcticus (strain DSM 17307 / VKM B-2377 / 273-4)).